The sequence spans 202 residues: Small ribosomal subunit protein uS2 (202 aa).

It belongs to the universal ribosomal protein uS2 family.

The protein is Small ribosomal subunit protein uS2 of Methanocorpusculum labreanum (strain ATCC 43576 / DSM 4855 / Z).